The following is a 119-amino-acid chain: Large ribosomal subunit protein uL14c (119 aa).

This sequence belongs to the universal ribosomal protein uL14 family. Part of the 50S ribosomal subunit.

It is found in the plastid. It localises to the chloroplast. Binds to 23S rRNA. In Ostreococcus tauri, this protein is Large ribosomal subunit protein uL14c.